Consider the following 347-residue polypeptide: D-alanine--D-alanine ligase (347 aa).

The 203-residue stretch at 131–333 (KRVLESAGIA…YPELIERLVD (203 aa)) folds into the ATP-grasp domain. 161–216 (EEKLAYPVFTKPSNMGSSVGISKSENQEELRQALKLAFRYDSRVLVEQGVNAREIE) is a binding site for ATP. Mg(2+) is bound by residues Asp-287, Glu-300, and Asn-302.

It belongs to the D-alanine--D-alanine ligase family. It depends on Mg(2+) as a cofactor. Requires Mn(2+) as cofactor.

Its subcellular location is the cytoplasm. The catalysed reaction is 2 D-alanine + ATP = D-alanyl-D-alanine + ADP + phosphate + H(+). It functions in the pathway cell wall biogenesis; peptidoglycan biosynthesis. In terms of biological role, cell wall formation. The polypeptide is D-alanine--D-alanine ligase (Streptococcus pneumoniae (strain JJA)).